Reading from the N-terminus, the 623-residue chain is MPSVYGARLTTFEDEEKESEYGYVRKVSGPVVIADGMNGAAMYELVRVGHDNLIGEIIRLEGDSATIQVYEETAGLMVNDPVLRTHKPLSVELGPGILGNIFDGIQRPLKTIAIRSGDVYIPRGVSVPALDKDTLWEFQPKKIGEGDLLTGGDLYATVFENSLMQHHVALPPDAMGKVTYVAPAGQYSLKDTVLELEFQGVKKSFTMLQAWPVRTPRPVSSKLAADTPLLTGQRVLDALFPSVLGGTCAIPGAFGCGKTVISQALSKYSNSDTVVYVGCGERGNEMAEVLMDFPQLTMTLPDGREESVMKRTTLVANTSNMPVAAREASIYTGITIAEYFRDMGYNVSMMADSTSRWAEALREISGRLAEMPADSGYPAYLAARLASFYERAGKVKCLGGPERTGSVTIVGAVSPPGGDFSDPVTSATLSIVQVFWGLDKKLAQRKHFPSVNWLISYSKYSTALESFYEQFDPDFINIRTKAREVLQREDDLNEIVQLVGKDALAEGDKITLETAKLLREDYLAQNAFTPYDKFCPFYKSVWMMRNIIHFYNLANQAVEKGAGMDGQKITYTLIKHRLGDLFYRLVSQKFEDPAEGEPALVAKFKKLHEDLTAGFRALEDETR.

Residue 252–259 (GAFGCGKT) participates in ATP binding.

It belongs to the ATPase alpha/beta chains family. In terms of assembly, V-ATPase is a heteromultimeric enzyme composed of a peripheral catalytic V1 complex (main components: subunits A, B, C, D, E, and F) attached to an integral membrane V0 proton pore complex (main component: the proteolipid protein).

The catalysed reaction is ATP + H2O + 4 H(+)(in) = ADP + phosphate + 5 H(+)(out). In terms of biological role, catalytic subunit of the peripheral V1 complex of vacuolar ATPase. V-ATPase vacuolar ATPase is responsible for acidifying a variety of intracellular compartments in eukaryotic cells. The protein is V-type proton ATPase catalytic subunit A of Citrus unshiu (Satsuma mandarin).